The sequence spans 143 residues: 3-dehydroquinate dehydratase (143 aa).

Residue tyrosine 22 is the Proton acceptor of the active site. Positions 73, 79, and 86 each coordinate substrate. Histidine 99 acts as the Proton donor in catalysis. Substrate contacts are provided by residues 100 to 101 (IS) and arginine 110.

This sequence belongs to the type-II 3-dehydroquinase family. Homododecamer.

The enzyme catalyses 3-dehydroquinate = 3-dehydroshikimate + H2O. It functions in the pathway metabolic intermediate biosynthesis; chorismate biosynthesis; chorismate from D-erythrose 4-phosphate and phosphoenolpyruvate: step 3/7. Catalyzes a trans-dehydration via an enolate intermediate. The protein is 3-dehydroquinate dehydratase of Mycolicibacterium paratuberculosis (strain ATCC BAA-968 / K-10) (Mycobacterium paratuberculosis).